The chain runs to 90 residues: MATSAAAVQDEPATRFAKDQLKAIIERIERLEEEKKTISDDIRDVYAEAKGNGYDVKALRTIVRMRKQDANERAEQETILETYMQALGML.

The protein belongs to the UPF0335 family.

In Rhodopseudomonas palustris (strain BisB5), this protein is UPF0335 protein RPD_1405.